Consider the following 146-residue polypeptide: Putative calcium-binding protein CML19 (146 aa).

EF-hand domains lie at 3 to 38, 40 to 75, 79 to 114, and 115 to 146; these read AATAEFRRVFSAFDRDADGKISAAELRLCMKAALGE, MSAEEAEALVSSADTDDDGLLDEEEFTKLAVQLEMG, ERCRGLMEAFRMYEMEGEGRITPASLKRMLSKLGSH, and QGIEECQTMICRFDLDGDGVISFEEFKIMMDA. Residues D16, D18, D20, K22, E27, D53, D55, D57, and E64 each contribute to the Ca(2+) site. 4 residues coordinate Ca(2+): D128, D130, D132, and E139.

Potential calcium sensor. In Oryza sativa subsp. japonica (Rice), this protein is Putative calcium-binding protein CML19 (CML19).